The primary structure comprises 286 residues: Putative 2-aminoethylphosphonate transport system permease protein PhnU (286 aa).

The next 6 helical transmembrane spans lie at 19–39 (WLLL…SLIV), 76–96 (FFAT…LVFI), 111–131 (FIAL…GSAG), 150–170 (FLYS…PLVM), 202–222 (VIFP…LLLT), and 254–274 (YTVA…LFSL). An ABC transmembrane type-1 domain is found at 68-275 (LLNTLQIAFF…VLSLGLFSLY (208 aa)).

This sequence belongs to the binding-protein-dependent transport system permease family.

The protein localises to the cell inner membrane. Functionally, probably part of the PhnSTUV complex (TC 3.A.1.11.5) involved in 2-aminoethylphosphonate import. Probably responsible for the translocation of the substrate across the membrane. The polypeptide is Putative 2-aminoethylphosphonate transport system permease protein PhnU (phnU) (Salmonella choleraesuis (strain SC-B67)).